The chain runs to 265 residues: Undecaprenyl-diphosphatase (265 aa).

Transmembrane regions (helical) follow at residues 19–39, 42–62, 80–100, 108–128, 143–163, 181–201, 220–240, and 243–263; these read FLPVSSTGHLILVGHLIGFTG, ADSFDVIIQLGAILAVVCLYW, IRGLWMLFLTSLPAGLIGLVA, LFNPWSVALALSVGAVMIFLV, MTPGLALGIGCFQCLSLWPGF, SLAAEYSFIGAVPLMFAATLY, IGFVVSFVSALIAVKAFIVLV, and ITLRPFAWYRLALAAAVFFFW.

This sequence belongs to the UppP family.

It is found in the cell inner membrane. It catalyses the reaction di-trans,octa-cis-undecaprenyl diphosphate + H2O = di-trans,octa-cis-undecaprenyl phosphate + phosphate + H(+). Functionally, catalyzes the dephosphorylation of undecaprenyl diphosphate (UPP). Confers resistance to bacitracin. The chain is Undecaprenyl-diphosphatase from Solidesulfovibrio magneticus (strain ATCC 700980 / DSM 13731 / RS-1) (Desulfovibrio magneticus).